Reading from the N-terminus, the 314-residue chain is Vacuolar membrane protein FOSTERSB_4073 (314 aa).

Residues 32–60 (KPTSSVVSETSSKSLPSLTSSAFSTSSGA) form a disordered region. A helical transmembrane segment spans residues 93–113 (VYIAVGAVIGAIFISILIWWL). A phosphoserine mark is found at Ser148, Ser254, and Ser274. Residues 240-309 (EERKLNLNRP…PSMFLDDVLN (70 aa)) are disordered. Residues 254–269 (SPERKEKKINSMEGYH) show a composition bias toward basic and acidic residues.

This sequence belongs to the PRM5 family.

The protein localises to the vacuole membrane. The polypeptide is Vacuolar membrane protein FOSTERSB_4073 (Saccharomyces cerevisiae (strain FostersB) (Baker's yeast)).